Here is a 473-residue protein sequence, read N- to C-terminus: Ribulose bisphosphate carboxylase large chain (473 aa).

Substrate is bound by residues Asn-116 and Thr-166. Lys-168 (proton acceptor) is an active-site residue. Lys-170 lines the substrate pocket. Mg(2+)-binding residues include Lys-194, Asp-196, and Glu-197. Residue Lys-194 is modified to N6-carboxylysine. The active-site Proton acceptor is the His-287. Substrate is bound by residues Arg-288, His-320, and Ser-372.

It belongs to the RuBisCO large chain family. Type I subfamily. As to quaternary structure, heterohexadecamer of 8 large chains and 8 small chains. Mg(2+) is required as a cofactor.

It carries out the reaction 2 (2R)-3-phosphoglycerate + 2 H(+) = D-ribulose 1,5-bisphosphate + CO2 + H2O. It catalyses the reaction D-ribulose 1,5-bisphosphate + O2 = 2-phosphoglycolate + (2R)-3-phosphoglycerate + 2 H(+). Functionally, ruBisCO catalyzes two reactions: the carboxylation of D-ribulose 1,5-bisphosphate, the primary event in carbon dioxide fixation, as well as the oxidative fragmentation of the pentose substrate. Both reactions occur simultaneously and in competition at the same active site. The chain is Ribulose bisphosphate carboxylase large chain from Nitrosomonas eutropha (strain DSM 101675 / C91 / Nm57).